Here is a 64-residue protein sequence, read N- to C-terminus: DNA-directed RNA polymerase subunit omega (64 aa).

It belongs to the RNA polymerase subunit omega family. In terms of assembly, the RNAP catalytic core consists of 2 alpha, 1 beta, 1 beta' and 1 omega subunit. When a sigma factor is associated with the core the holoenzyme is formed, which can initiate transcription.

The enzyme catalyses RNA(n) + a ribonucleoside 5'-triphosphate = RNA(n+1) + diphosphate. Its function is as follows. Promotes RNA polymerase assembly. Latches the N- and C-terminal regions of the beta' subunit thereby facilitating its interaction with the beta and alpha subunits. The sequence is that of DNA-directed RNA polymerase subunit omega from Oceanobacillus iheyensis (strain DSM 14371 / CIP 107618 / JCM 11309 / KCTC 3954 / HTE831).